Consider the following 399-residue polypeptide: Lovastatin esterase (399 aa).

S57 serves as the catalytic Nucleophile. Residues K60 and Y170 each act as proton acceptor in the active site.

It belongs to the class-A beta-lactamase family.

The catalysed reaction is lovastatin + H2O = monacolin J + (S)-2-methylbutanoate + H(+). The enzyme catalyses pravastatin lactone + H2O = pravastatin diol lactone + (S)-2-methylbutanoate + H(+). It carries out the reaction mevastatin + H2O = compactin diol lactone + (S)-2-methylbutanoate + H(+). In terms of biological role, esterase that can hydrolyze the side chain of lovastatin to produce monacolin J. Is also able to hydrolyze the side chains of mevastatin and pravastatin, but not simvastatin. This is Lovastatin esterase from Penicillium rubens (strain ATCC 28089 / DSM 1075 / NRRL 1951 / Wisconsin 54-1255) (Penicillium chrysogenum).